Reading from the N-terminus, the 262-residue chain is Putative hydroxypyruvate isomerase (262 aa).

Catalysis depends on proton donor/acceptor residues glutamate 146 and glutamate 244.

This sequence belongs to the hyi family.

The catalysed reaction is 3-hydroxypyruvate = 2-hydroxy-3-oxopropanoate. Functionally, catalyzes the reversible isomerization between hydroxypyruvate and 2-hydroxy-3-oxopropanoate (also termed tartronate semialdehyde). In Caenorhabditis elegans, this protein is Putative hydroxypyruvate isomerase.